The primary structure comprises 386 residues: Phosphoglycerate kinase (386 aa).

Residues 21 to 23, Arg-36, 59 to 62, Arg-113, and Arg-146 contribute to the substrate site; these read DLN and HLGR. ATP-binding positions include Lys-197, Glu-314, and 340–343; that span reads GGDT.

The protein belongs to the phosphoglycerate kinase family. As to quaternary structure, monomer.

It localises to the cytoplasm. The enzyme catalyses (2R)-3-phosphoglycerate + ATP = (2R)-3-phospho-glyceroyl phosphate + ADP. It participates in carbohydrate degradation; glycolysis; pyruvate from D-glyceraldehyde 3-phosphate: step 2/5. The sequence is that of Phosphoglycerate kinase from Vibrio vulnificus (strain CMCP6).